Consider the following 700-residue polypeptide: Hedgehog-interacting protein (700 aa).

The N-terminal stretch at 1-17 (MLKMLSFKLLLLAVALG) is a signal peptide. The N-linked (GlcNAc...) asparagine glycan is linked to N99. Disulfide bonds link C216–C536, C218–C543, C402–C624, C435–C452, C500–C594, C612–C623, C625–C634, C639–C649, C643–C655, and C657–C666. The segment at 376–388 (LDDMEEMDGLSDF) is interaction with SHH zinc binding site. Zn(2+) is bound at residue D383. 3 N-linked (GlcNAc...) asparagine glycosylation sites follow: N416, N447, and N459. 2 consecutive EGF-like domains span residues 607 to 634 (DCSRLCRNGYYTPTGKCCCSPGWEGDFC) and 635 to 667 (RIAKCEPACRHGGVCVRPNKCLCKKGYLGPQCE).

The protein belongs to the HHIP family. In terms of assembly, interacts with all three hedgehog family members, SHH, IHH and DHH. In the adult brain, high expression found in the ventral cochlear nucleus, medial habenula, indusium griseum and tenia tecta. Some expression also in the caudate putamen, the nucleus accumbens, the ventral pallidum and in the superficial layers of the superior colliculus.

It localises to the cell membrane. The protein localises to the secreted. Functionally, modulates hedgehog signaling in several cell types, including brain and lung through direct interaction with members of the hedgehog family. Soluble forms inhibit Shh-induced differentiation in the fibroblast cell line C3H/10T1/2. This chain is Hedgehog-interacting protein (Hhip), found in Mus musculus (Mouse).